A 58-amino-acid polypeptide reads, in one-letter code: Rho-conotoxin TIA (58 aa).

The N-terminal stretch at 1–16 (MFTVFLLVVLATTGVS) is a signal peptide. Positions 17–38 (FTLDRASDGGNAVAKKSDVTAR) are excised as a propeptide. The segment at 40-42 (NWR) is interaction with ADRA1B. Cystine bridges form between Cys43/Cys49 and Cys44/Cys57. Residues 45-47 (LIP) are lacks the Ser-Xaa-Pro motif that is crucial for potent interaction with nAChR. A Cysteine amide modification is found at Cys57.

It belongs to the conotoxin A superfamily. Expressed by the venom duct.

It localises to the secreted. Allosteric inhibitor of alpha-1B adrenergic receptors (ADRA1B). Binds to an allosteric modulatory site on transmembrane helix 6 and 7 at the base of extracellular loop 3 of ADRA1B. Also weakly inhibits alpha-1A (ADRA1A) and alpha-1D (ADRA1D) adrenergic receptors in a competitive manner. Potently inhibits contractions of vas deferens, spleen and aorta in response to noradrenaline. May also inhibits nicotinic acetylcholine receptors with a possible distinct nAChR binding mode from other alpha-conotoxins, due to a different three residue motif (lacks the Ser-Xaa-Pro motif). This chain is Rho-conotoxin TIA, found in Conus tulipa (Fish-hunting cone snail).